Consider the following 453-residue polypeptide: Pup--protein ligase (453 aa).

Residue Glu-9 coordinates Mg(2+). Arg-53 is an ATP binding site. Mg(2+) is bound at residue Tyr-55. Asp-57 functions as the Proton acceptor in the catalytic mechanism. Glu-63 is a binding site for Mg(2+). ATP-binding residues include Thr-66 and Trp-420.

Belongs to the Pup ligase/Pup deamidase family. Pup-conjugating enzyme subfamily.

The catalysed reaction is ATP + [prokaryotic ubiquitin-like protein]-L-glutamate + [protein]-L-lysine = ADP + phosphate + N(6)-([prokaryotic ubiquitin-like protein]-gamma-L-glutamyl)-[protein]-L-lysine.. Its pathway is protein degradation; proteasomal Pup-dependent pathway. It participates in protein modification; protein pupylation. Its function is as follows. Catalyzes the covalent attachment of the prokaryotic ubiquitin-like protein modifier Pup to the proteasomal substrate proteins, thereby targeting them for proteasomal degradation. This tagging system is termed pupylation. The ligation reaction involves the side-chain carboxylate of the C-terminal glutamate of Pup and the side-chain amino group of a substrate lysine. This chain is Pup--protein ligase, found in Nocardioides sp. (strain ATCC BAA-499 / JS614).